The chain runs to 293 residues: Nitrogenase iron protein (293 aa).

10–17 (GKGGIGKS) contributes to the ATP binding site. Residue cysteine 98 participates in [4Fe-4S] cluster binding. Arginine 101 is modified (ADP-ribosylarginine; by dinitrogenase reductase ADP-ribosyltransferase). Cysteine 133 is a binding site for [4Fe-4S] cluster.

Belongs to the NifH/BchL/ChlL family. In terms of assembly, homodimer. The cofactor is [4Fe-4S] cluster. The reversible ADP-ribosylation of Arg-101 inactivates the nitrogenase reductase and regulates nitrogenase activity.

The enzyme catalyses N2 + 8 reduced [2Fe-2S]-[ferredoxin] + 16 ATP + 16 H2O = H2 + 8 oxidized [2Fe-2S]-[ferredoxin] + 2 NH4(+) + 16 ADP + 16 phosphate + 6 H(+). Its function is as follows. The key enzymatic reactions in nitrogen fixation are catalyzed by the nitrogenase complex, which has 2 components: the iron protein and the molybdenum-iron protein. The chain is Nitrogenase iron protein from Stutzerimonas stutzeri (strain A1501) (Pseudomonas stutzeri).